Here is a 380-residue protein sequence, read N- to C-terminus: Tetraacyldisaccharide 4'-kinase (380 aa).

51-58 is a binding site for ATP; that stretch reads SVGGTGKT.

This sequence belongs to the LpxK family.

The enzyme catalyses a lipid A disaccharide + ATP = a lipid IVA + ADP + H(+). The protein operates within glycolipid biosynthesis; lipid IV(A) biosynthesis; lipid IV(A) from (3R)-3-hydroxytetradecanoyl-[acyl-carrier-protein] and UDP-N-acetyl-alpha-D-glucosamine: step 6/6. In terms of biological role, transfers the gamma-phosphate of ATP to the 4'-position of a tetraacyldisaccharide 1-phosphate intermediate (termed DS-1-P) to form tetraacyldisaccharide 1,4'-bis-phosphate (lipid IVA). This Bacteroides thetaiotaomicron (strain ATCC 29148 / DSM 2079 / JCM 5827 / CCUG 10774 / NCTC 10582 / VPI-5482 / E50) protein is Tetraacyldisaccharide 4'-kinase.